The chain runs to 160 residues: uncharacterized protein (160 aa).

C2H2-type zinc fingers lie at residues 10–32 (LSCLLCEQTFDATEKLDEHLPTH), 41–64 (QTCDICGRTMRSSLELHQHYKRYH), and 75–98 (FQCQLCDKVFLLQDHLKVHVKIEH). At Tyr-115 the chain carries Phosphotyrosine. Ser-116 bears the Phosphoserine mark.

It is found in the nucleus. Its function is as follows. May be involved in transcriptional regulation. This is an uncharacterized protein from Drosophila melanogaster (Fruit fly).